The following is an 859-amino-acid chain: Bifunctional levopimaradiene synthase, chloroplastic (859 aa).

The N-terminal 70 residues, M1 to S70, are a transit peptide targeting the chloroplast. Residue K259 participates in substrate binding. Positions 392 and 394 each coordinate Mg(2+). The DXDD motif signature appears at D392 to D395. Residue K479 participates in substrate binding. Positions 611, 615, 755, 759, and 763 each coordinate Mg(2+). Residues D611–D615 carry the DDXXD motif motif.

It belongs to the terpene synthase family. Tpsd subfamily. The cofactor is Mg(2+).

It localises to the plastid. It is found in the chloroplast. It carries out the reaction (2E,6E,10E)-geranylgeranyl diphosphate = (+)-copalyl diphosphate. The catalysed reaction is (+)-copalyl diphosphate = abieta-8(14),12-diene + diphosphate. It functions in the pathway terpene metabolism; oleoresin biosynthesis. Functionally, involved in defensive oleoresin formation in conifers in response to insect attack or other injury. Involved in diterpene (C20) olefins biosynthesis. Bifunctional enzyme that catalyzes two sequential cyclizations of geranylgeranyl diphosphate (GGPP) to levopimaradiene. Levopimaradiene is the major products of the enzyme followed by abietadiene, neoabietadiene and palustradiene. The sequence is that of Bifunctional levopimaradiene synthase, chloroplastic (TPS-LAS) from Picea abies (Norway spruce).